Consider the following 364-residue polypeptide: Methylthioribose-1-phosphate isomerase (364 aa).

D254 functions as the Proton donor in the catalytic mechanism.

This sequence belongs to the eIF-2B alpha/beta/delta subunits family. MtnA subfamily.

The protein resides in the cytoplasm. It is found in the nucleus. The catalysed reaction is 5-(methylsulfanyl)-alpha-D-ribose 1-phosphate = 5-(methylsulfanyl)-D-ribulose 1-phosphate. It functions in the pathway amino-acid biosynthesis; L-methionine biosynthesis via salvage pathway; L-methionine from S-methyl-5-thio-alpha-D-ribose 1-phosphate: step 1/6. Functionally, catalyzes the interconversion of methylthioribose-1-phosphate (MTR-1-P) into methylthioribulose-1-phosphate (MTRu-1-P). In Drosophila sechellia (Fruit fly), this protein is Methylthioribose-1-phosphate isomerase.